Consider the following 476-residue polypeptide: Sulfate adenylyltransferase subunit 1 (476 aa).

The 216-residue stretch at 24–239 folds into the tr-type G domain; it reads KSLLRFLTCG…LLETVDVDYE (216 aa). Residues 33 to 40 form a G1 region; that stretch reads GSVDDGKS. Residue 33–40 coordinates GTP; sequence GSVDDGKS. A G2 region spans residues 91–95; sequence GITID. The interval 112–115 is G3; it reads DTPG. Residues 112–116 and 167–170 each bind GTP; these read DTPGH and NKMD. The interval 167–170 is G4; the sequence is NKMD. Residues 205–207 are G5; sequence SAL.

It belongs to the TRAFAC class translation factor GTPase superfamily. Classic translation factor GTPase family. CysN/NodQ subfamily. As to quaternary structure, heterodimer composed of CysD, the smaller subunit, and CysN.

The catalysed reaction is sulfate + ATP + H(+) = adenosine 5'-phosphosulfate + diphosphate. The protein operates within sulfur metabolism; hydrogen sulfide biosynthesis; sulfite from sulfate: step 1/3. Its function is as follows. With CysD forms the ATP sulfurylase (ATPS) that catalyzes the adenylation of sulfate producing adenosine 5'-phosphosulfate (APS) and diphosphate, the first enzymatic step in sulfur assimilation pathway. APS synthesis involves the formation of a high-energy phosphoric-sulfuric acid anhydride bond driven by GTP hydrolysis by CysN coupled to ATP hydrolysis by CysD. This chain is Sulfate adenylyltransferase subunit 1, found in Vibrio parahaemolyticus serotype O3:K6 (strain RIMD 2210633).